Here is a 176-residue protein sequence, read N- to C-terminus: MEMTGLNPETDRIIEVAMIITDSDLNVLAQSEVYAIHQSDDLLDNMDEWNTATHGRTGLTQRVRESSHTEAEVEQKLLDFMSEWIPGRATPMCGNSIHQDRRFMVKYMPKLENYFHYRNLDVSTLKELAKRWNPPIAKSVVKRGSHKALDDILESIEEMRHYREHFLISAPKAEAQ.

In terms of domain architecture, Exonuclease spans 2 to 159 (EMTGLNPETD…DDILESIEEM (158 aa)). The active site involves Y117.

It belongs to the oligoribonuclease family.

The protein localises to the cytoplasm. Functionally, 3'-to-5' exoribonuclease specific for small oligoribonucleotides. The protein is Oligoribonuclease of Neisseria gonorrhoeae (strain ATCC 700825 / FA 1090).